Reading from the N-terminus, the 380-residue chain is Cytochrome b (380 aa).

The next 4 membrane-spanning stretches (helical) occupy residues 33–53, 77–98, 113–133, and 178–198; these read FGSL…FLAM, WLIR…FIHV, WNIG…GYVL, and FFAF…VHLL. Heme b is bound by residues histidine 83 and histidine 97. Residues histidine 182 and histidine 196 each contribute to the heme b site. Histidine 201 serves as a coordination point for a ubiquinone. A run of 4 helical transmembrane segments spans residues 226 to 246, 288 to 308, 320 to 340, and 347 to 367; these read IKDL…VLFF, LGGV…PLLN, ITQV…XXXX, and XXXX…IFMP.

The protein belongs to the cytochrome b family. As to quaternary structure, the cytochrome bc1 complex contains 11 subunits: 3 respiratory subunits (MT-CYB, CYC1 and UQCRFS1), 2 core proteins (UQCRC1 and UQCRC2) and 6 low-molecular weight proteins (UQCRH/QCR6, UQCRB/QCR7, UQCRQ/QCR8, UQCR10/QCR9, UQCR11/QCR10 and a cleavage product of UQCRFS1). This cytochrome bc1 complex then forms a dimer. Heme b is required as a cofactor.

Its subcellular location is the mitochondrion inner membrane. Component of the ubiquinol-cytochrome c reductase complex (complex III or cytochrome b-c1 complex) that is part of the mitochondrial respiratory chain. The b-c1 complex mediates electron transfer from ubiquinol to cytochrome c. Contributes to the generation of a proton gradient across the mitochondrial membrane that is then used for ATP synthesis. This is Cytochrome b (MT-CYB) from Rhipidomys leucodactylus (White-footed climbing mouse).